Reading from the N-terminus, the 282-residue chain is Pantothenate synthetase (282 aa).

An ATP-binding site is contributed by 30-37 (MGNLHDGH). The active-site Proton donor is His37. Residue Gln61 coordinates (R)-pantoate. Residue Gln61 participates in beta-alanine binding. 149 to 152 (GEKD) contributes to the ATP binding site. Gln155 provides a ligand contact to (R)-pantoate. Residue 186 to 189 (MSSR) participates in ATP binding.

This sequence belongs to the pantothenate synthetase family. As to quaternary structure, homodimer.

The protein resides in the cytoplasm. The enzyme catalyses (R)-pantoate + beta-alanine + ATP = (R)-pantothenate + AMP + diphosphate + H(+). The protein operates within cofactor biosynthesis; (R)-pantothenate biosynthesis; (R)-pantothenate from (R)-pantoate and beta-alanine: step 1/1. In terms of biological role, catalyzes the condensation of pantoate with beta-alanine in an ATP-dependent reaction via a pantoyl-adenylate intermediate. The protein is Pantothenate synthetase of Alteromonas mediterranea (strain DSM 17117 / CIP 110805 / LMG 28347 / Deep ecotype).